We begin with the raw amino-acid sequence, 512 residues long: DNA damage-binding protein CMR1 (512 aa).

A disordered region spans residues 32-96 (SQIKREAGVE…IPNVNDNQLL (65 aa)). Residues 34–46 (IKREAGVEDEHLD) are compositionally biased toward basic and acidic residues. A compositionally biased stretch (basic residues) spans 47 to 60 (RKRKKKAGSAKKAV). WD repeat units lie at residues 189–230 (LTAE…PEDE), 241–281 (LFTK…SEEI), 289–329 (DDPL…TEIN), 333–373 (LSDK…NKPE), 390–429 (DSRLSVSAVSYSPMDETLVCNGYDDTIRLFDVSGTLPEDL), 442–481 (GRWTSILKARFKLNMDVFAIANMKRAIDIYTSSGVQLAHL), and 482–512 (PTATVPAVISWHPTQNWVVGGNSSGKAFLFT).

It belongs to the WD repeat DDB2/WDR76 family.

DNA-binding protein that binds to both single- and double-stranded DNA. Binds preferentially to UV-damaged DNA. May be involved in DNA-metabolic processes. In Kluyveromyces lactis (strain ATCC 8585 / CBS 2359 / DSM 70799 / NBRC 1267 / NRRL Y-1140 / WM37) (Yeast), this protein is DNA damage-binding protein CMR1.